A 238-amino-acid chain; its full sequence is MLKFTAISFVLLNAAESVDHQKPIRALDSQPLLKFTRTPNDSNVTFGEKFVLSCGANGAPLPSIYWELNGMRIQGEETSNVYENILNDGKQVSNAAMVSSHYRIPCATARNSGAYKCIIDNGLTKLEHVAKVFVGGNKTNCALNDNGAPFISMTVDFRLEISNNAVALSCRSETATEWSWHKGEQLLTNDGERYQMFPSGDLIIRNISWSDMGEYNCTARNHFGETTAITFLYPTLAK.

Residues methionine 1–serine 17 form the signal peptide. Positions proline 31–alanine 130 constitute an Ig-like C2-type 1 domain. Residues asparagine 40 and asparagine 43 are each glycosylated (N-linked (GlcNAc...) asparagine). Residues cysteine 54 and cysteine 117 are joined by a disulfide bond. N-linked (GlcNAc...) asparagine glycosylation is found at asparagine 137, asparagine 206, and asparagine 216. The Ig-like C2-type 2 domain maps to proline 149–threonine 230. Cysteine 170 and cysteine 217 are oxidised to a cystine.

In terms of tissue distribution, expressed in PVT neurons and weakly in some head neurons.

It is found in the secreted. Functionally, probably not involved in maintaining the position of ASI and ASH head neuron cell bodies and ventral nerve cord axons of PVQ, PVP, RMEV, AVK and HSN neurons. In Caenorhabditis elegans, this protein is Zwei Ig domain protein zig-2.